A 602-amino-acid polypeptide reads, in one-letter code: Elongation factor 4 (602 aa).

The 183-residue stretch at 7–189 (RNIRNFSIIA…AIVQRIPAPQ (183 aa)) folds into the tr-type G domain. Residues 19 to 24 (DHGKST) and 136 to 139 (NKID) each bind GTP.

The protein belongs to the TRAFAC class translation factor GTPase superfamily. Classic translation factor GTPase family. LepA subfamily.

Its subcellular location is the cell inner membrane. It carries out the reaction GTP + H2O = GDP + phosphate + H(+). Functionally, required for accurate and efficient protein synthesis under certain stress conditions. May act as a fidelity factor of the translation reaction, by catalyzing a one-codon backward translocation of tRNAs on improperly translocated ribosomes. Back-translocation proceeds from a post-translocation (POST) complex to a pre-translocation (PRE) complex, thus giving elongation factor G a second chance to translocate the tRNAs correctly. Binds to ribosomes in a GTP-dependent manner. This is Elongation factor 4 from Xylella fastidiosa (strain 9a5c).